Reading from the N-terminus, the 236-residue chain is Small ribosomal subunit protein uS3 (236 aa).

Residues isoleucine 39–histidine 107 enclose the KH type-2 domain.

It belongs to the universal ribosomal protein uS3 family. As to quaternary structure, part of the 30S ribosomal subunit. Forms a tight complex with proteins S10 and S14.

Binds the lower part of the 30S subunit head. Binds mRNA in the 70S ribosome, positioning it for translation. In Bartonella quintana (strain Toulouse) (Rochalimaea quintana), this protein is Small ribosomal subunit protein uS3.